Consider the following 486-residue polypeptide: Ribulose bisphosphate carboxylase large chain (486 aa).

The substrate site is built by N126 and T176. Residue K178 is the Proton acceptor of the active site. K180 is a binding site for substrate. 3 residues coordinate Mg(2+): K204, D206, and E207. K204 carries the post-translational modification N6-carboxylysine. H296 functions as the Proton acceptor in the catalytic mechanism. R297, H329, and S381 together coordinate substrate.

Belongs to the RuBisCO large chain family. Type I subfamily. Heterohexadecamer of 8 large chains and 8 small chains. The cofactor is Mg(2+).

It catalyses the reaction 2 (2R)-3-phosphoglycerate + 2 H(+) = D-ribulose 1,5-bisphosphate + CO2 + H2O. The catalysed reaction is D-ribulose 1,5-bisphosphate + O2 = 2-phosphoglycolate + (2R)-3-phosphoglycerate + 2 H(+). RuBisCO catalyzes two reactions: the carboxylation of D-ribulose 1,5-bisphosphate, the primary event in carbon dioxide fixation, as well as the oxidative fragmentation of the pentose substrate. Both reactions occur simultaneously and in competition at the same active site. The sequence is that of Ribulose bisphosphate carboxylase large chain from Methylacidiphilum infernorum (isolate V4) (Methylokorus infernorum (strain V4)).